The following is a 122-amino-acid chain: Small ribosomal subunit protein uS13 (122 aa).

The disordered stretch occupies residues 97–122 (PVRGQRTHTNARTRKGPAKAIAGKKK).

This sequence belongs to the universal ribosomal protein uS13 family. In terms of assembly, part of the 30S ribosomal subunit. Forms a loose heterodimer with protein S19. Forms two bridges to the 50S subunit in the 70S ribosome.

Located at the top of the head of the 30S subunit, it contacts several helices of the 16S rRNA. In the 70S ribosome it contacts the 23S rRNA (bridge B1a) and protein L5 of the 50S subunit (bridge B1b), connecting the 2 subunits; these bridges are implicated in subunit movement. Contacts the tRNAs in the A and P-sites. The sequence is that of Small ribosomal subunit protein uS13 from Brucella anthropi (strain ATCC 49188 / DSM 6882 / CCUG 24695 / JCM 21032 / LMG 3331 / NBRC 15819 / NCTC 12168 / Alc 37) (Ochrobactrum anthropi).